The chain runs to 502 residues: Maturase K (502 aa).

This sequence belongs to the intron maturase 2 family. MatK subfamily.

It localises to the plastid. The protein resides in the chloroplast. Usually encoded in the trnK tRNA gene intron. Probably assists in splicing its own and other chloroplast group II introns. This Vaccinium vitis-idaea (Mountain cranberry) protein is Maturase K.